Here is a 203-residue protein sequence, read N- to C-terminus: MSKIIIATANKGKAKEFEKIFAKFNIEVATLADFPEIGEIEETGTTFAENAALKAETVASLLNQTVIADDSGLIVDVLNGAPGVYSARYAGVAHDDAKNNEKLLKNLEGVEPAKRTARFHCTLAVATPSEKTSFYTGEVEGVIAEQLCGTNGFGYDPLFFLPEFGLTMAEIPAEKKNEISHRANAIKQLEKDLAEVVEKVTKK.

A substrate-binding site is contributed by threonine 8–lysine 13. Mg(2+) is bound by residues glutamate 41 and aspartate 70. Aspartate 70 functions as the Proton acceptor in the catalytic mechanism. Residues serine 71, phenylalanine 153–aspartate 156, lysine 176, and histidine 181–arginine 182 contribute to the substrate site.

This sequence belongs to the HAM1 NTPase family. Homodimer. Mg(2+) is required as a cofactor.

It carries out the reaction XTP + H2O = XMP + diphosphate + H(+). The enzyme catalyses dITP + H2O = dIMP + diphosphate + H(+). The catalysed reaction is ITP + H2O = IMP + diphosphate + H(+). Functionally, pyrophosphatase that catalyzes the hydrolysis of nucleoside triphosphates to their monophosphate derivatives, with a high preference for the non-canonical purine nucleotides XTP (xanthosine triphosphate), dITP (deoxyinosine triphosphate) and ITP. Seems to function as a house-cleaning enzyme that removes non-canonical purine nucleotides from the nucleotide pool, thus preventing their incorporation into DNA/RNA and avoiding chromosomal lesions. The sequence is that of dITP/XTP pyrophosphatase from Listeria innocua serovar 6a (strain ATCC BAA-680 / CLIP 11262).